A 120-amino-acid polypeptide reads, in one-letter code: Large ribosomal subunit protein uL18 (120 aa).

The disordered stretch occupies residues 1–22 (MKLTRRESKNRRHRRVRGKVVG). Positions 8 to 18 (SKNRRHRRVRG) are enriched in basic residues.

It belongs to the universal ribosomal protein uL18 family. In terms of assembly, part of the 50S ribosomal subunit; part of the 5S rRNA/L5/L18/L25 subcomplex. Contacts the 5S and 23S rRNAs.

This is one of the proteins that bind and probably mediate the attachment of the 5S RNA into the large ribosomal subunit, where it forms part of the central protuberance. In Nostoc punctiforme (strain ATCC 29133 / PCC 73102), this protein is Large ribosomal subunit protein uL18.